The chain runs to 233 residues: Ribose-5-phosphate isomerase A (233 aa).

Substrate is bound by residues 28 to 31 (TGST), 83 to 86 (DGAD), and 96 to 99 (KGGG). The active-site Proton acceptor is the Glu-105. Lys-123 serves as a coordination point for substrate.

This sequence belongs to the ribose 5-phosphate isomerase family. Homodimer.

It catalyses the reaction aldehydo-D-ribose 5-phosphate = D-ribulose 5-phosphate. It participates in carbohydrate degradation; pentose phosphate pathway; D-ribose 5-phosphate from D-ribulose 5-phosphate (non-oxidative stage): step 1/1. Catalyzes the reversible conversion of ribose-5-phosphate to ribulose 5-phosphate. This Rhizobium rhizogenes (strain K84 / ATCC BAA-868) (Agrobacterium radiobacter) protein is Ribose-5-phosphate isomerase A.